A 637-amino-acid polypeptide reads, in one-letter code: Phosphomethylpyrimidine synthase (637 aa).

Residues Asn242, Met271, Tyr300, His336, 356–358 (SRG), 397–400 (DGLR), and Glu436 contribute to the substrate site. Position 440 (His440) interacts with Zn(2+). Residue Tyr463 coordinates substrate. His504 serves as a coordination point for Zn(2+). Positions 584, 587, and 592 each coordinate [4Fe-4S] cluster.

This sequence belongs to the ThiC family. As to quaternary structure, homodimer. The cofactor is [4Fe-4S] cluster.

It catalyses the reaction 5-amino-1-(5-phospho-beta-D-ribosyl)imidazole + S-adenosyl-L-methionine = 4-amino-2-methyl-5-(phosphooxymethyl)pyrimidine + CO + 5'-deoxyadenosine + formate + L-methionine + 3 H(+). It participates in cofactor biosynthesis; thiamine diphosphate biosynthesis. In terms of biological role, catalyzes the synthesis of the hydroxymethylpyrimidine phosphate (HMP-P) moiety of thiamine from aminoimidazole ribotide (AIR) in a radical S-adenosyl-L-methionine (SAM)-dependent reaction. The protein is Phosphomethylpyrimidine synthase of Herminiimonas arsenicoxydans.